Consider the following 361-residue polypeptide: Porphobilinogen deaminase (361 aa).

Position 2 is an N-acetylserine (serine 2). Serine 69 carries the post-translational modification Phosphoserine. Lysine 74 is modified (N6-acetyllysine). Phosphoserine is present on serine 147. Cysteine 261 bears the S-(dipyrrolylmethanemethyl)cysteine mark.

Belongs to the HMBS family. Monomer. Dipyrromethane is required as a cofactor.

Its subcellular location is the cytoplasm. It localises to the cytosol. The catalysed reaction is 4 porphobilinogen + H2O = hydroxymethylbilane + 4 NH4(+). It functions in the pathway porphyrin-containing compound metabolism; protoporphyrin-IX biosynthesis; coproporphyrinogen-III from 5-aminolevulinate: step 2/4. As part of the heme biosynthetic pathway, catalyzes the sequential polymerization of four molecules of porphobilinogen to form hydroxymethylbilane, also known as preuroporphyrinogen. Catalysis begins with the assembly of the dipyrromethane cofactor by the apoenzyme from two molecules of porphobilinogen or from preuroporphyrinogen. The covalently linked cofactor acts as a primer, around which the tetrapyrrole product is assembled. In the last step of catalysis, the product, preuroporphyrinogen, is released, leaving the cofactor bound to the holodeaminase intact. In Mus musculus (Mouse), this protein is Porphobilinogen deaminase (Hmbs).